A 183-amino-acid chain; its full sequence is Protein Syd (183 aa).

The protein belongs to the Syd family.

Its subcellular location is the cell inner membrane. Functionally, interacts with the SecY protein in vivo. May bind preferentially to an uncomplexed state of SecY, thus functioning either as a chelating agent for excess SecY in the cell or as a regulatory factor that negatively controls the translocase function. This Yersinia enterocolitica serotype O:8 / biotype 1B (strain NCTC 13174 / 8081) protein is Protein Syd.